We begin with the raw amino-acid sequence, 309 residues long: NAD kinase (309 aa).

Catalysis depends on Asp89, which acts as the Proton acceptor. NAD(+) contacts are provided by residues 89-90 (DG), 163-164 (NE), His174, Arg191, Asp193, and 204-209 (TAYSLS).

The protein belongs to the NAD kinase family. A divalent metal cation is required as a cofactor.

Its subcellular location is the cytoplasm. The enzyme catalyses NAD(+) + ATP = ADP + NADP(+) + H(+). Its function is as follows. Involved in the regulation of the intracellular balance of NAD and NADP, and is a key enzyme in the biosynthesis of NADP. Catalyzes specifically the phosphorylation on 2'-hydroxyl of the adenosine moiety of NAD to yield NADP. In Shewanella frigidimarina (strain NCIMB 400), this protein is NAD kinase.